The following is a 970-amino-acid chain: Sodium/calcium exchanger 1 (970 aa).

The signal sequence occupies residues 1 to 32; it reads MLQLRLLPTFSMGCHLLAVVALLFSHVDLISA. The Extracellular portion of the chain corresponds to 33-71; the sequence is ETEMEGEGNETGECTGSYYCKKGVILPIWEPQDPSFGDK. N-linked (GlcNAc...) asparagine glycosylation occurs at N41. Residues 72 to 92 form a helical membrane-spanning segment; it reads IARATVYFVAMVYMFLGVSII. Residues 93 to 133 lie on the Cytoplasmic side of the membrane; sequence ADRFMSSIEVITSQEKEITIKKPNGETTKTTVRIWNETVSN. A helical transmembrane segment spans residues 134-154; the sequence is LTLMALGSSAPEILLSVIEVC. One copy of the Alpha-1 repeat lies at 138 to 178; the sequence is ALGSSAPEILLSVIEVCGHNFTAGDLGPSTIVGSAAFNMFI. Residues 155–167 are Extracellular-facing; the sequence is GHNFTAGDLGPST. N-linked (GlcNAc...) asparagine glycosylation is present at N157. Residues 168 to 188 form a helical membrane-spanning segment; it reads IVGSAAFNMFIIIALCVYVVP. Over 189 to 201 the chain is Cytoplasmic; it reads DGETRKIKHLRVF. Residues 202–222 traverse the membrane as a helical segment; the sequence is FVTAAWSIFAYTWLYIILSVI. Residues 223-228 lie on the Extracellular side of the membrane; that stretch reads SPGVVE. The helical transmembrane segment at 229 to 249 threads the bilayer; sequence VWEGLLTFFFFPICVVFAWVA. Topologically, residues 250–797 are cytoplasmic; sequence DRRLLFYKYV…FVPPTEYWNG (548 aa). The segment at 251–270 is putative calmodulin-binding region; it reads RRLLFYKYVYKRYRAGKQRG. Phosphoserine occurs at positions 282 and 389. 2 Calx-beta domains span residues 393–493 and 524–624; these read VNTE…VHLS and ATVT…LEIG. Positions 417, 453, 478, 479, 481, 483, 486, 530, 531, 532, 548, 584, 610, 611, 612, and 715 each coordinate Ca(2+). A helical transmembrane segment spans residues 798–818; that stretch reads WACFIVSILMIGILTAFIGDL. Topologically, residues 819–821 are extracellular; the sequence is ASH. A helical transmembrane segment spans residues 822-842; sequence FGCTIGLKDSVTAVVFVALGT. The stretch at 839–875 is one Alpha-2 repeat; it reads ALGTSVPDTFASKVAATQDQYADASIGNVTGSNAVNV. At 843-871 the chain is on the cytoplasmic side; that stretch reads SVPDTFASKVAATQDQYADASIGNVTGSN. The chain crosses the membrane as a helical span at residues 872 to 892; it reads AVNVFLGIGVAWSIAAIYHAA. Over 893-903 the chain is Extracellular; the sequence is NGEQFKVSPGT. A helical transmembrane segment spans residues 904 to 924; that stretch reads LAFSVTLFTIFAFINVGVLLY. Over 925–941 the chain is Cytoplasmic; that stretch reads RRRPEIGGELGGPRTAK. The helical transmembrane segment at 942-962 threads the bilayer; the sequence is LLTSCLFVLLWLLYIFFSSLE. Topologically, residues 963-970 are extracellular; it reads AYCHIKGF.

This sequence belongs to the Ca(2+):cation antiporter (CaCA) (TC 2.A.19) family. SLC8 subfamily. In terms of tissue distribution, cardiac sarcolemma (at protein level).

It is found in the cell membrane. The protein localises to the sarcolemma. It catalyses the reaction Ca(2+)(in) + 3 Na(+)(out) = Ca(2+)(out) + 3 Na(+)(in). Activated by micromolar levels of Ca(2+). In the absence of regulatory Ca(2+), channels open rapidly, and then inactivate rapidly. Inactivation is enhanced by Na(+) and is inhibited by micromolar levels of Ca(2+). Its function is as follows. Mediates the exchange of one Ca(2+) ion against three to four Na(+) ions across the cell membrane, and thereby contributes to the regulation of cytoplasmic Ca(2+) levels and Ca(2+)-dependent cellular processes. Contributes to Ca(2+) transport during excitation-contraction coupling in muscle. In a first phase, voltage-gated channels mediate the rapid increase of cytoplasmic Ca(2+) levels due to release of Ca(2+) stores from the endoplasmic reticulum. SLC8A1 mediates the export of Ca(2+) from the cell during the next phase, so that cytoplasmic Ca(2+) levels rapidly return to baseline. Required for normal embryonic heart development and the onset of heart contractions. This is Sodium/calcium exchanger 1 (SLC8A1) from Canis lupus familiaris (Dog).